A 414-amino-acid chain; its full sequence is Multifunctional CCA protein (414 aa).

Residues G8 and R11 each contribute to the ATP site. CTP is bound by residues G8 and R11. Residues D21 and D23 each contribute to the Mg(2+) site. Residues R91, R137, and R140 each contribute to the ATP site. The CTP site is built by R91, R137, and R140. Positions 226–327 constitute an HD domain; it reads TGVHVMMVVD…VTLFERCDAF (102 aa).

The protein belongs to the tRNA nucleotidyltransferase/poly(A) polymerase family. Bacterial CCA-adding enzyme type 1 subfamily. As to quaternary structure, monomer. Can also form homodimers and oligomers. Mg(2+) serves as cofactor. The cofactor is Ni(2+).

The catalysed reaction is a tRNA precursor + 2 CTP + ATP = a tRNA with a 3' CCA end + 3 diphosphate. The enzyme catalyses a tRNA with a 3' CCA end + 2 CTP + ATP = a tRNA with a 3' CCACCA end + 3 diphosphate. In terms of biological role, catalyzes the addition and repair of the essential 3'-terminal CCA sequence in tRNAs without using a nucleic acid template. Adds these three nucleotides in the order of C, C, and A to the tRNA nucleotide-73, using CTP and ATP as substrates and producing inorganic pyrophosphate. tRNA 3'-terminal CCA addition is required both for tRNA processing and repair. Also involved in tRNA surveillance by mediating tandem CCA addition to generate a CCACCA at the 3' terminus of unstable tRNAs. While stable tRNAs receive only 3'-terminal CCA, unstable tRNAs are marked with CCACCA and rapidly degraded. This is Multifunctional CCA protein from Herminiimonas arsenicoxydans.